The chain runs to 60 residues: Transcriptional regulatory protein SenN (60 aa).

Positions 11–31 (RFRKRKTFGNQILPLELLIEK) form a DNA-binding region, H-T-H motif.

The protein to B.subtilis SenS.

In terms of biological role, regulates the expression of extracellular-protein genes of Bacillus natto. The sequence is that of Transcriptional regulatory protein SenN (senN) from Bacillus subtilis subsp. natto.